A 347-amino-acid chain; its full sequence is UDP-rhamnose/UDP-galactose transporter 1 (347 aa).

Helical transmembrane passes span 11 to 31 (AVSD…IIMA), 43 to 63 (FGFA…VGMV), 80 to 100 (LLWF…SLML), 103 to 123 (VGFY…LEWI), 132 to 152 (EVKA…VTDV), 159 to 179 (FICA…IGSL), 195 to 215 (APIQ…LLSG), 223 to 243 (MTYG…FCNI), 256 to 276 (SFQV…WLLF), and 285 to 305 (IAGM…VDIE).

It belongs to the TPT transporter family. TPT (TC 2.A.7.9) subfamily. As to expression, widely expressed in the whole plant.

The protein resides in the golgi apparatus membrane. Nucleotide-sugar transporter that transports UDP-rhamnose or UDP-galactose and UMP in a strict counter-exchange mode. This Arabidopsis thaliana (Mouse-ear cress) protein is UDP-rhamnose/UDP-galactose transporter 1.